Reading from the N-terminus, the 557-residue chain is MGKSKSATKVVAEIKATKPLKKGKREPEDDIDTKVSLKKQKKDVIAAVQKEKAVKKVPKKVESSDDSDSESEEEEKAKKVPAKKAASSSDESSDDSSSDDEPAPKKAVAATNGTVAKKSKDDSSSSDDDSSDEEVAVTKKPAAAAKNGSVKAKKESSSEDDSSSEDEPAKKPAAKIAKPAAKDSSSSDDDSDEDSEDEKPATKKAAPAAAKAASSSDSSDEDSDEESEDEKPAQKKADTKASKKSSSDESSESEEDESEDEEETPKKKSSDVEMVDAEKSSAKQPKTPSTPAAGGSKTLFAANLSFNIERADVENFFKEAGEVVDVRFSTNRDDGSFRGFGHVEFASSEEAQKALEFHGRPLLGREIRLDIAQERGERGERPAFTPQSGNFRSGGDGGDEKKIFVKGFDASLSEDDIKNTLREHFSSCGEIKNVSVPIDRDTGNSKGIAYLEFSEGKEKALELNGSDMGGGFYLVVDEPRPRGDSSGGGGFGRGNGRFGSGGGRGRDGGRGRFGSGGGRGRDGGRGRFGSGGGRGSDRGRGRPSFTPQGKKTTFGDE.

Disordered stretches follow at residues 1–297 (MGKS…GGSK), 376–398 (GERG…GDGG), and 474–557 (LVVD…FGDE). The segment covering 49 to 63 (QKEKAVKKVPKKVES) has biased composition (basic and acidic residues). Acidic residues-rich tracts occupy residues 64–74 (SDDSDSESEEE), 91–101 (ESSDDSSSDDE), and 124–135 (SSSDDDSSDEEV). The segment covering 174 to 184 (AKIAKPAAKDS) has biased composition (low complexity). A compositionally biased stretch (acidic residues) spans 186–197 (SSDDDSDEDSED). The span at 203–217 (KKAAPAAAKAASSSD) shows a compositional bias: low complexity. A compositionally biased stretch (acidic residues) spans 218-229 (SSDEDSDEESED). A compositionally biased stretch (basic and acidic residues) spans 230-247 (EKPAQKKADTKASKKSSS). Acidic residues predominate over residues 249–263 (ESSESEEDESEDEEE). Over residues 264–281 (TPKKKSSDVEMVDAEKSS) the composition is skewed to basic and acidic residues. The 78-residue stretch at 297–374 (KTLFAANLSF…REIRLDIAQE (78 aa)) folds into the RRM 1 domain. The RRM 2 domain maps to 401–481 (KKIFVKGFDA…FYLVVDEPRP (81 aa)). Residues 485–503 (SSGGGGFGRGNGRFGSGGG) show a composition bias toward gly residues.

As to quaternary structure, interacts with THAL in the nucleus. In terms of tissue distribution, expressed in roots, leaves, shoots and flowers.

The protein localises to the nucleus. The protein resides in the nucleolus. In terms of biological role, involved in pre-rRNA processing and ribosome assembly. Is associated with intranucleolar chromatin and pre-ribosomal particles and plays a role in controlling activation and repression of a specific subset of rRNA genes located in distinctive nucleolar organizer regions. Binds specifically rDNA chromatin and may be required to maintain rDNA chromatin structure, but is probably not required for the overall histone methylation status of 45S rRNA genes. Involved in leaf polarity establishment by functioning cooperatively with AS1 to repress abaxial genes ARF3, ARF4, KAN1, KAN2, YAB1 and YAB5, and the knox homeobox genes KNAT1, KNAT2, KNAT6, and STM to promote adaxial development in leaf primordia at shoot apical meristems at high temperatures. The protein is Nucleolin 1 of Arabidopsis thaliana (Mouse-ear cress).